Consider the following 104-residue polypeptide: Sweet protein mabinlin-3 (104 aa).

Cystine bridges form between C4–C53, C17–C42, C43–C91, and C55–C99.

This sequence belongs to the 2S seed storage albumins family. As to quaternary structure, heterodimer of a small A and a large B chain linked by disulfide bonds.

Functionally, heat stable 2S seed storage protein having sweetness-inducing activity. This Capparis masaikai (Mabinlang) protein is Sweet protein mabinlin-3.